Here is a 121-residue protein sequence, read N- to C-terminus: RxLR effector protein PexRD2 (121 aa).

Residues Met1–Ala18 form the signal peptide. The short motif at Arg38–Arg56 is the RxLR-dEER element. The tract at residues Ala57–Val121 is WY domain.

This sequence belongs to the RxLR effector family.

It is found in the secreted. Its subcellular location is the host cytoplasm. The protein resides in the host nucleus. In terms of biological role, secreted effector involved in P.mirabilis colonization of host plants. May perturb the signaling of cell death associated with plant immunity, via interaction with a host MAP kinase. The sequence is that of RxLR effector protein PexRD2 from Phytophthora mirabilis.